Here is a 237-residue protein sequence, read N- to C-terminus: tRNA1(Val) (adenine(37)-N6)-methyltransferase (237 aa).

This sequence belongs to the methyltransferase superfamily. tRNA (adenine-N(6)-)-methyltransferase family.

The protein resides in the cytoplasm. It carries out the reaction adenosine(37) in tRNA1(Val) + S-adenosyl-L-methionine = N(6)-methyladenosine(37) in tRNA1(Val) + S-adenosyl-L-homocysteine + H(+). Functionally, specifically methylates the adenine in position 37 of tRNA(1)(Val) (anticodon cmo5UAC). The polypeptide is tRNA1(Val) (adenine(37)-N6)-methyltransferase (Parabacteroides distasonis (strain ATCC 8503 / DSM 20701 / CIP 104284 / JCM 5825 / NCTC 11152)).